We begin with the raw amino-acid sequence, 350 residues long: Dihydroorotate dehydrogenase (quinone) (350 aa).

FMN-binding positions include 59-63 (AGLDK) and Thr83. Lys63 contributes to the substrate binding site. Residue 108–112 (NRMGF) coordinates substrate. Residues Asn136 and Asn169 each coordinate FMN. Asn169 contacts substrate. The Nucleophile role is filled by Ser172. Asn174 provides a ligand contact to substrate. Residues Lys214 and Thr242 each contribute to the FMN site. 243–244 (NT) contacts substrate. FMN contacts are provided by residues Gly265, Gly294, and 315-316 (YS).

The protein belongs to the dihydroorotate dehydrogenase family. Type 2 subfamily. In terms of assembly, monomer. FMN is required as a cofactor.

The protein resides in the cell membrane. It carries out the reaction (S)-dihydroorotate + a quinone = orotate + a quinol. Its pathway is pyrimidine metabolism; UMP biosynthesis via de novo pathway; orotate from (S)-dihydroorotate (quinone route): step 1/1. Its function is as follows. Catalyzes the conversion of dihydroorotate to orotate with quinone as electron acceptor. In Aromatoleum aromaticum (strain DSM 19018 / LMG 30748 / EbN1) (Azoarcus sp. (strain EbN1)), this protein is Dihydroorotate dehydrogenase (quinone).